The primary structure comprises 117 residues: Ribonuclease P protein component (117 aa).

It belongs to the RnpA family. Consists of a catalytic RNA component (M1 or rnpB) and a protein subunit.

It catalyses the reaction Endonucleolytic cleavage of RNA, removing 5'-extranucleotides from tRNA precursor.. Functionally, RNaseP catalyzes the removal of the 5'-leader sequence from pre-tRNA to produce the mature 5'-terminus. It can also cleave other RNA substrates such as 4.5S RNA. The protein component plays an auxiliary but essential role in vivo by binding to the 5'-leader sequence and broadening the substrate specificity of the ribozyme. This chain is Ribonuclease P protein component, found in Aliivibrio fischeri (strain ATCC 700601 / ES114) (Vibrio fischeri).